Here is a 349-residue protein sequence, read N- to C-terminus: Arginine kinase (349 aa).

The Phosphagen kinase N-terminal domain maps to 3–85 (DLAELWEKVS…LGPVILDYHK (83 aa)). Substrate is bound at residue 58–62 (GVGVY). Residues 113–349 (WIVSTRVRVG…EEIIKLEKAA (237 aa)) enclose the Phosphagen kinase C-terminal domain. ATP-binding positions include 116–120 (STRVR) and histidine 179. Position 219 (glutamate 219) interacts with substrate. Residue arginine 223 coordinates ATP. Cysteine 265 is a binding site for substrate. Residues 274–278 (RASVH) and 302–307 (RGIHGE) each bind ATP. Glutamate 307 lines the substrate pocket.

The protein belongs to the ATP:guanido phosphotransferase family.

The enzyme catalyses L-arginine + ATP = N(omega)-phospho-L-arginine + ADP + H(+). This is Arginine kinase from Liolophura japonica (Chiton).